We begin with the raw amino-acid sequence, 3680 residues long: Dystrophin (3680 aa).

Positions 1 to 237 are actin-binding; the sequence is MLWWEEVEDC…ILMYITSLFQ (237 aa). 2 consecutive Calponin-homology (CH) domains span residues 15–119 and 134–240; these read DVQK…LHWQ and TNSE…QVLP. The interval 63-72 is ANK2- and ANK-3 binding; the sequence is PKEKGSTRVH. Residues 310–323 show a composition bias toward polar residues; the sequence is TSDPTRSPLPSQHL. The disordered stretch occupies residues 310–332; the sequence is TSDPTRSPLPSQHLETPEDKSFG. Spectrin repeat units lie at residues 340 to 448, 449 to 557, 560 to 668, 720 to 829, 831 to 935, 944 to 1047, 1050 to 1156, 1159 to 1265, 1268 to 1369, 1370 to 1465, 1470 to 1570, 1573 to 1678, 1681 to 1780, 1781 to 1876, 1879 to 1981, 1994 to 2103, 2106 to 2210, 2213 to 2320, 2321 to 2418, 2470 to 2572, 2575 to 2681, 2684 to 2797, 2803 to 2925, and 2930 to 3035; these read ANLD…NLHK, VLMD…LLQD, LKWQ…QISQ, EIRK…WLEY, NNII…ELQT, RYQE…KLEE, AKLR…ALKG, DKTV…TLEE, ACWH…LLEQ, SIQS…LFQK, EQRL…QLEK, KLSR…LLLE, KHME…KASI, PLKE…KALE, HQWY…TVHE, EISY…RFDR, EKWR…RLEE, NILS…EIEA, HVKD…LRAK, FNRA…QLTE, KDST…ALEE, RLLQ…HLEA, KRLH…RKID, and RLQE…QLHE. The interaction with SYNM stretch occupies residues 1418–1915; that stretch reads DLTSHEISLE…PEPRDERKIK (498 aa). The WW domain occupies 3050 to 3083; the sequence is TSVQGPWERAISPNKVPYYINHETQTTCWDHPKM. Residues 3053–3403 form an interaction with SYNM region; the sequence is QGPWERAISP…TVLEGDNMET (351 aa). A ZZ-type; degenerate zinc finger spans residues 3303 to 3359; that stretch reads KHQAKCNICKECPIIGFRYRSLKHFNYDICQSCFFSGRVAKGHKMHYPMVEYCTPTT. C3308, C3311, C3332, and C3335 together coordinate Zn(2+). The interval 3461–3513 is binds to SNTB1; it reads DDEHLLIQHYWRSLNQESPLSQPRSPAQILISLESEERGELERILADLEGRNR. S3478, S3485, and S3495 each carry phosphoserine. Disordered regions lie at residues 3524–3549 and 3595–3680; these read QQHE…QSPR and PQAE…EDTM. Polar residues-rich tracts occupy residues 3602–3621 and 3658–3668; these read NGTT…SSQP and LNHSFPSSRGR. Phosphoserine is present on residues S3607, S3608, S3612, S3618, S3619, and S3661.

In terms of assembly, interacts with SYNM. Interacts with the syntrophins SNTG1 and SNTG2. Interacts with KRT19. Component of the dystrophin-associated glycoprotein complex which is composed of three subcomplexes: a cytoplasmic complex comprised of DMD (or UTRN), DTNA and a number of syntrophins, such as SNTB1, SNTB2, SNTG1 and SNTG2, the transmembrane dystroglycan complex, and the sarcoglycan-sarcospan complex. Interacts with DAG1 (betaDAG1) with DMD; the interaction is inhibited by phosphorylation on the PPXY motif of DAG1. Interacts with SYNM; SNTA1 and SNTB1. Interacts with CMYA5. Directly interacts with ANK2 and ANK3; these interactions do not interfere with betaDAG1-binding and are necessary for proper localization in muscle cells. Identified in a dystroglycan complex that contains at least PRX, DRP2, UTRN, DMD and DAG1. Interacts with DTNB. Interacts with PGM5; the interaction is direct. Interacts with NOS1; localizes NOS1 to sarcolemma in muscle cells.

The protein localises to the cell membrane. It localises to the sarcolemma. The protein resides in the cytoplasm. It is found in the cytoskeleton. Its subcellular location is the postsynaptic cell membrane. Functionally, anchors the extracellular matrix to the cytoskeleton via F-actin. Ligand for dystroglycan. Component of the dystrophin-associated glycoprotein complex which accumulates at the neuromuscular junction (NMJ) and at a variety of synapses in the peripheral and central nervous systems and has a structural function in stabilizing the sarcolemma. Also implicated in signaling events and synaptic transmission. This chain is Dystrophin (DMD), found in Canis lupus familiaris (Dog).